A 172-amino-acid polypeptide reads, in one-letter code: Outer-membrane lipoprotein carrier protein (172 aa).

An N-terminal signal peptide occupies residues 1 to 16 (MRIALLWVAFGALALA).

The protein belongs to the LolA family. In terms of assembly, monomer.

It is found in the periplasm. Functionally, participates in the translocation of lipoproteins from the inner membrane to the outer membrane. Only forms a complex with a lipoprotein if the residue after the N-terminal Cys is not an aspartate (The Asp acts as a targeting signal to indicate that the lipoprotein should stay in the inner membrane). The chain is Outer-membrane lipoprotein carrier protein from Wolinella succinogenes (strain ATCC 29543 / DSM 1740 / CCUG 13145 / JCM 31913 / LMG 7466 / NCTC 11488 / FDC 602W) (Vibrio succinogenes).